Here is a 388-residue protein sequence, read N- to C-terminus: MGKKAIQFGGGNIGRGFVAEFLHEAGYEVVFVDVMDKIIDALTSNPSYQVTEVSDEGERTKTITNYSAINSKTHESEVVQEIATADVVTCAVGPNILKFIAPVIAKGIDARTASKPLAVIACENAIGATDTLHGFIKQNTDESRLSTMGERAQFANSAIDRIVPNQPAGEGLNVRIEKFYEWVVEKTPFGSVGHPDIPAIHWVDHLEPYIERKLFTVNTGHATTAYYGYQRGKKMIAEALADPEIRQIVHQVLEETASLIVAKHEISEEEQKEYVNTIISRISNPYLEDNVERVGRAPLRKLSRKERFIGPAAQLAEKGMKYDALLGSVEMALRFQNVPGDEESVELAKILNEMSADDATAKLTGLEKSHPLYQPVQNVVAKVQKGGK.

Residue 5–16 (AIQFGGGNIGRG) coordinates NAD(+). The active site involves K213.

It belongs to the mannitol dehydrogenase family. Monomer.

It catalyses the reaction D-mannitol 1-phosphate + NAD(+) = beta-D-fructose 6-phosphate + NADH + H(+). Catalyzes the NAD(H)-dependent interconversion of D-fructose 6-phosphate and D-mannitol 1-phosphate in the mannitol metabolic pathway. In Aspergillus clavatus (strain ATCC 1007 / CBS 513.65 / DSM 816 / NCTC 3887 / NRRL 1 / QM 1276 / 107), this protein is Mannitol-1-phosphate 5-dehydrogenase (mpdA).